We begin with the raw amino-acid sequence, 103 residues long: Nematocin (103 aa).

An N-terminal signal peptide occupies residues 1–19 (MGSSPILLVLAISIGLASA). An intrachain disulfide couples C20 to C25. A Tyrosine amide modification is found at Y30. Positions 31–103 (GRTIRCSSCG…QGGCQTSAMC (73 aa)) are excised as a propeptide.

The protein belongs to the vasopressin/oxytocin family. As to expression, detected in thermosensory AFD neurons, neurosecretory NSM cells, AVK interneurons, pharyngeal neuron M5, and the mechanosensory DVA neuron. Detected in male-specific CP motor neurons.

Its subcellular location is the secreted. Its function is as follows. Ligand for the G-protein coupled receptor ntr-1. Plays a role in gustatory associative learning. Also plays a role in male mating behavior. The protein is Nematocin of Caenorhabditis elegans.